The following is a 252-amino-acid chain: Spermatogenesis-associated protein 9 (252 aa).

A helical transmembrane segment spans residues 145–167; sequence TSIMYASYAALIYLAVCVNAVLA. Basic and acidic residues predominate over residues 208–221; that stretch reads KAKPYRSLPEKPDN. The tract at residues 208-235 is disordered; the sequence is KAKPYRSLPEKPDNLLDQPKPPANKQSN.

Its subcellular location is the membrane. In terms of biological role, may play at role in testicular development/spermatogenesis and may be an important factor in male infertility. In Mus musculus (Mouse), this protein is Spermatogenesis-associated protein 9 (Spata9).